The chain runs to 339 residues: DNA-directed RNA polymerase subunit alpha (339 aa).

The segment at 1 to 233 (MVREEVAGST…DLFLPFLHAE (233 aa)) is alpha N-terminal domain (alpha-NTD). The interval 264–339 (KKGIPLNCIF…IDLLKNKLSF (76 aa)) is alpha C-terminal domain (alpha-CTD).

Belongs to the RNA polymerase alpha chain family. In terms of assembly, in plastids the minimal PEP RNA polymerase catalytic core is composed of four subunits: alpha, beta, beta', and beta''. When a (nuclear-encoded) sigma factor is associated with the core the holoenzyme is formed, which can initiate transcription.

Its subcellular location is the plastid. The protein resides in the chloroplast. The enzyme catalyses RNA(n) + a ribonucleoside 5'-triphosphate = RNA(n+1) + diphosphate. DNA-dependent RNA polymerase catalyzes the transcription of DNA into RNA using the four ribonucleoside triphosphates as substrates. This chain is DNA-directed RNA polymerase subunit alpha, found in Festucopsis festucoides.